We begin with the raw amino-acid sequence, 507 residues long: DNA replication licensing factor MCM6 (507 aa).

Positions 32-239 (LYHNLCTSLF…TDYAIARRIV (208 aa)) constitute an MCM domain. Residues His45, Ser85, Thr86, Ala87, Lys88, Ser89, and Asn190 each coordinate ATP. The Arginine finger motif lies at 214-217 (SRFD). ADP contacts are provided by Arg305 and Glu308. Residue Lys329 is modified to N6-acetyllysine. A disordered region spans residues 365–392 (GPGGINGHADSPAPVNGFNGSGEDASQE). 3 positions are modified to phosphoserine: Ser375, Ser390, and Ser448. Phosphothreonine is present on Thr477.

The protein belongs to the MCM family. As to quaternary structure, component of the MCM2-7 complex. The complex forms a toroidal hexameric ring with the proposed subunit order MCM2-MCM6-MCM4-MCM7-MCM3-MCM5. Component of the CMG helicase complex, a hexameric ring of related MCM2-7 subunits stabilized by CDC45 and the tetrameric GINS complex. May interact with MCM10. Interacts with TIPIN. Interacts with CDT1. Interacts with MCMBP. Interacts with DDI2. O-glycosylated (O-GlcNAcylated), in a cell cycle-dependent manner.

The protein resides in the nucleus. The protein localises to the chromosome. The catalysed reaction is ATP + H2O = ADP + phosphate + H(+). Its function is as follows. Acts as a component of the MCM2-7 complex (MCM complex) which is the replicative helicase essential for 'once per cell cycle' DNA replication initiation and elongation in eukaryotic cells. Core component of CDC45-MCM-GINS (CMG) helicase, the molecular machine that unwinds template DNA during replication, and around which the replisome is built. The active ATPase sites in the MCM2-7 ring are formed through the interaction surfaces of two neighboring subunits such that a critical structure of a conserved arginine finger motif is provided in trans relative to the ATP-binding site of the Walker A box of the adjacent subunit. The six ATPase active sites, however, are likely to contribute differentially to the complex helicase activity. This Rattus norvegicus (Rat) protein is DNA replication licensing factor MCM6 (Mcm6).